We begin with the raw amino-acid sequence, 114 residues long: Phosphoribosyl-AMP cyclohydrolase (114 aa).

Position 80 (D80) interacts with Mg(2+). Position 81 (C81) interacts with Zn(2+). The Mg(2+) site is built by D82 and D84. The Zn(2+) site is built by C97 and C104.

This sequence belongs to the PRA-CH family. Homodimer. Mg(2+) is required as a cofactor. The cofactor is Zn(2+).

The protein localises to the cytoplasm. It carries out the reaction 1-(5-phospho-beta-D-ribosyl)-5'-AMP + H2O = 1-(5-phospho-beta-D-ribosyl)-5-[(5-phospho-beta-D-ribosylamino)methylideneamino]imidazole-4-carboxamide. It participates in amino-acid biosynthesis; L-histidine biosynthesis; L-histidine from 5-phospho-alpha-D-ribose 1-diphosphate: step 3/9. Catalyzes the hydrolysis of the adenine ring of phosphoribosyl-AMP. The protein is Phosphoribosyl-AMP cyclohydrolase of Rhodococcus jostii (strain RHA1).